We begin with the raw amino-acid sequence, 340 residues long: Adenosine kinase (340 aa).

Asp293 is a catalytic residue.

Belongs to the carbohydrate kinase PfkB family. Monomer. The cofactor is Mg(2+).

The catalysed reaction is adenosine + ATP = AMP + ADP + H(+). Its pathway is purine metabolism; AMP biosynthesis via salvage pathway; AMP from adenosine: step 1/1. In terms of biological role, ATP dependent phosphorylation of adenosine and other related nucleoside analogs to monophosphate derivatives. This Dictyostelium discoideum (Social amoeba) protein is Adenosine kinase (adk).